The primary structure comprises 336 residues: UDP-3-O-acylglucosamine N-acyltransferase (336 aa).

The active-site Proton acceptor is His236.

This sequence belongs to the transferase hexapeptide repeat family. LpxD subfamily. Homotrimer.

The enzyme catalyses a UDP-3-O-[(3R)-3-hydroxyacyl]-alpha-D-glucosamine + a (3R)-hydroxyacyl-[ACP] = a UDP-2-N,3-O-bis[(3R)-3-hydroxyacyl]-alpha-D-glucosamine + holo-[ACP] + H(+). It functions in the pathway bacterial outer membrane biogenesis; LPS lipid A biosynthesis. Catalyzes the N-acylation of UDP-3-O-acylglucosamine using 3-hydroxyacyl-ACP as the acyl donor. Is involved in the biosynthesis of lipid A, a phosphorylated glycolipid that anchors the lipopolysaccharide to the outer membrane of the cell. The chain is UDP-3-O-acylglucosamine N-acyltransferase from Aromatoleum aromaticum (strain DSM 19018 / LMG 30748 / EbN1) (Azoarcus sp. (strain EbN1)).